The chain runs to 84 residues: Large ribosomal subunit protein bL27 (84 aa).

The tract at residues 1 to 22 (MAHKKAGGSTRNGRDSESKRLG) is disordered.

This sequence belongs to the bacterial ribosomal protein bL27 family.

This Shewanella baltica (strain OS223) protein is Large ribosomal subunit protein bL27.